A 357-amino-acid chain; its full sequence is Sorbitol dehydrogenase (357 aa).

Ala-2 carries the N-acetylalanine modification. Cys-45 contributes to the Zn(2+) binding site. Tyr-51 is a binding site for substrate. Zn(2+) contacts are provided by His-70 and Glu-71. Glu-156 provides a ligand contact to substrate. Residues Ile-184, Asp-204, and Arg-209 each contribute to the NAD(+) site. A phosphoserine mark is found at Ser-211 and Ser-225. NAD(+) contacts are provided by residues 273-275 (VGL) and 297-299 (VFR). Arg-299 and Tyr-300 together coordinate substrate.

This sequence belongs to the zinc-containing alcohol dehydrogenase family. Homotetramer. Zn(2+) serves as cofactor.

It localises to the mitochondrion membrane. It is found in the cell projection. The protein resides in the cilium. The protein localises to the flagellum. The catalysed reaction is xylitol + NAD(+) = D-xylulose + NADH + H(+). It catalyses the reaction L-iditol + NAD(+) = keto-L-sorbose + NADH + H(+). The enzyme catalyses keto-D-fructose + NADH + H(+) = D-sorbitol + NAD(+). Polyol dehydrogenase that catalyzes the reversible NAD(+)-dependent oxidation of various sugar alcohols. Is active with xylitol, L-iditol and D-sorbitol (D-glucitol) as substrates, leading to the C2-oxidized products D-xylulose, L-sorbose and D-fructose, respectively. Is a key enzyme in the polyol pathway that interconverts glucose and fructose via sorbitol, which constitutes an important alternate route for glucose metabolism. May play a role in sperm motility by using sorbitol as an alternative energy source for sperm motility. The protein is Sorbitol dehydrogenase (SORD) of Macaca fascicularis (Crab-eating macaque).